The chain runs to 206 residues: Large ribosomal subunit protein uL13y (206 aa).

It belongs to the universal ribosomal protein uL13 family.

The sequence is that of Large ribosomal subunit protein uL13y (RPL13AB) from Arabidopsis thaliana (Mouse-ear cress).